Reading from the N-terminus, the 165-residue chain is NADPH-dependent 7-cyano-7-deazaguanine reductase (165 aa).

Cysteine 56 functions as the Thioimide intermediate in the catalytic mechanism. Residue aspartate 63 is the Proton donor of the active site. Substrate contacts are provided by residues 78-80 (VES) and 97-98 (HE).

It belongs to the GTP cyclohydrolase I family. QueF type 1 subfamily.

It localises to the cytoplasm. It carries out the reaction 7-aminomethyl-7-carbaguanine + 2 NADP(+) = 7-cyano-7-deazaguanine + 2 NADPH + 3 H(+). Its pathway is tRNA modification; tRNA-queuosine biosynthesis. Catalyzes the NADPH-dependent reduction of 7-cyano-7-deazaguanine (preQ0) to 7-aminomethyl-7-deazaguanine (preQ1). The chain is NADPH-dependent 7-cyano-7-deazaguanine reductase from Bacillus mycoides (strain KBAB4) (Bacillus weihenstephanensis).